We begin with the raw amino-acid sequence, 38 residues long: Trypsin inhibitor DE5 beta chain (38 aa).

It belongs to the protease inhibitor I3 (leguminous Kunitz-type inhibitor) family. Heterodimer of an alpha and a beta chain linked by a disulfide bond.

Inhibition of trypsin. The protein is Trypsin inhibitor DE5 beta chain of Adenanthera pavonina (Sandal bead tree).